Reading from the N-terminus, the 397-residue chain is uncharacterized protein (397 aa).

Helical transmembrane passes span 22 to 42, 270 to 290, 327 to 347, and 362 to 382; these read ILTM…VAVG, IMTT…GIGV, VVLT…GAAL, and VVCG…MLPA.

The protein belongs to the ABC-4 integral membrane protein family. In terms of assembly, part of a complex composed of YknX, YknY and YknZ. The complex interacts with YknW.

The protein localises to the cell membrane. It is found in the membrane raft. In terms of biological role, part of an unusual four-component transporter, which is required for protection against the killing factor SdpC (sporulation-delaying protein). This is an uncharacterized protein from Bacillus subtilis (strain 168).